The sequence spans 292 residues: 4-hydroxy-tetrahydrodipicolinate synthase (292 aa).

Residue Thr-50 participates in pyruvate binding. Tyr-139 acts as the Proton donor/acceptor in catalysis. Lys-167 (schiff-base intermediate with substrate) is an active-site residue. Position 208 (Ile-208) interacts with pyruvate.

The protein belongs to the DapA family. In terms of assembly, homotetramer; dimer of dimers.

The protein resides in the cytoplasm. The enzyme catalyses L-aspartate 4-semialdehyde + pyruvate = (2S,4S)-4-hydroxy-2,3,4,5-tetrahydrodipicolinate + H2O + H(+). The protein operates within amino-acid biosynthesis; L-lysine biosynthesis via DAP pathway; (S)-tetrahydrodipicolinate from L-aspartate: step 3/4. Catalyzes the condensation of (S)-aspartate-beta-semialdehyde [(S)-ASA] and pyruvate to 4-hydroxy-tetrahydrodipicolinate (HTPA). The protein is 4-hydroxy-tetrahydrodipicolinate synthase of Oenococcus oeni (strain ATCC BAA-331 / PSU-1).